The primary structure comprises 581 residues: Fibrous sheath-interacting protein 1 (581 aa).

The segment at 1-77 (MDIIKGNLDG…SNDDKQESCS (77 aa)) is disordered. Polar residues predominate over residues 14–30 (PASNSRIRPGSRSSNAS). Positions 52–77 (GKEDHSESSNTENRRTSNDDKQESCS) are enriched in basic and acidic residues. Serine 87 is subject to Phosphoserine. Positions 105–153 (EPKLKELDSQLQDAIQKMKKLDKILAKKQRREKEIKKQGLEMRIKLWEE) form a coiled coil. Disordered regions lie at residues 338 to 365 (SSFS…VTPG) and 555 to 581 (HLKL…CKEP). Composition is skewed to basic and acidic residues over residues 344-360 (LENR…ERNM) and 569-581 (QETK…CKEP).

Belongs to the FSIP1 family.

The polypeptide is Fibrous sheath-interacting protein 1 (FSIP1) (Homo sapiens (Human)).